Here is a 352-residue protein sequence, read N- to C-terminus: Cobalt transport protein NhlF (352 aa).

A run of 8 helical transmembrane segments spans residues 23–43 (LASV…LYLG), 46–66 (GNPA…VLGV), 95–115 (VGFF…LVVA), 131–151 (EIGG…VAGL), 206–226 (PVGL…LLTL), 230–250 (AATG…LFAA), 290–310 (VIGL…LPMF), and 323–343 (FEFL…GALL).

It belongs to the NiCoT transporter (TC 2.A.52) family.

The protein resides in the cell membrane. Its activity is regulated as follows. Cobalt uptake is inhibited by uncouplers (CCCP and 3,5-di-tert-butyl-4-hydroxybenzylidenemalononitrile) and by the addition of excess nickel. Functionally, mediates energy-dependent uptake of cobalt ions into the cell. Can also transport nickel ions, but cobalt is the preferred substrate. This Rhodococcus rhodochrous protein is Cobalt transport protein NhlF (nhlF).